Here is a 219-residue protein sequence, read N- to C-terminus: Large ribosomal subunit protein bL25 (219 aa).

Residues 194–219 form a disordered region; it reads SSTELEETPEVPASAVPTTDQGESAE. The span at 209–219 shows a compositional bias: polar residues; sequence VPTTDQGESAE.

It belongs to the bacterial ribosomal protein bL25 family. CTC subfamily. Part of the 50S ribosomal subunit; part of the 5S rRNA/L5/L18/L25 subcomplex. Contacts the 5S rRNA. Binds to the 5S rRNA independently of L5 and L18.

This is one of the proteins that binds to the 5S RNA in the ribosome where it forms part of the central protuberance. This Legionella pneumophila (strain Paris) protein is Large ribosomal subunit protein bL25.